Reading from the N-terminus, the 112-residue chain is Transmembrane protein 14 homolog (112 aa).

4 consecutive transmembrane segments (helical) span residues 9-26 (FKLN…GVIG), 36-53 (LIAG…AYYL), 60-77 (VGLG…GVMG), and 87-109 (IPII…LYNI).

The protein belongs to the TMEM14 family.

The protein localises to the membrane. This chain is Transmembrane protein 14 homolog, found in Dictyostelium discoideum (Social amoeba).